The sequence spans 330 residues: NADH-quinone oxidoreductase subunit H (330 aa).

A run of 9 helical transmembrane segments spans residues Leu5–Leu25, Ile44–Leu64, Phe78–Ile98, Val122–Ala142, Val156–Ile176, Ile192–Phe212, Met240–Ile260, Phe271–Trp293, and Cys310–Ile330.

Belongs to the complex I subunit 1 family. In terms of assembly, NDH-1 is composed of 14 different subunits. Subunits NuoA, H, J, K, L, M, N constitute the membrane sector of the complex.

The protein localises to the cell inner membrane. The catalysed reaction is a quinone + NADH + 5 H(+)(in) = a quinol + NAD(+) + 4 H(+)(out). Its function is as follows. NDH-1 shuttles electrons from NADH, via FMN and iron-sulfur (Fe-S) centers, to quinones in the respiratory chain. The immediate electron acceptor for the enzyme in this species is believed to be ubiquinone. Couples the redox reaction to proton translocation (for every two electrons transferred, four hydrogen ions are translocated across the cytoplasmic membrane), and thus conserves the redox energy in a proton gradient. This subunit may bind ubiquinone. In Campylobacter curvus (strain 525.92), this protein is NADH-quinone oxidoreductase subunit H.